Consider the following 253-residue polypeptide: tRNA (guanine-N(1)-)-methyltransferase (253 aa).

S-adenosyl-L-methionine contacts are provided by residues Gly-116 and 136–141; that span reads VGDYIL.

Belongs to the RNA methyltransferase TrmD family. Homodimer.

It localises to the cytoplasm. The enzyme catalyses guanosine(37) in tRNA + S-adenosyl-L-methionine = N(1)-methylguanosine(37) in tRNA + S-adenosyl-L-homocysteine + H(+). In terms of biological role, specifically methylates guanosine-37 in various tRNAs. This Colwellia psychrerythraea (strain 34H / ATCC BAA-681) (Vibrio psychroerythus) protein is tRNA (guanine-N(1)-)-methyltransferase.